The following is a 562-amino-acid chain: MKDYLRTQIRRVLDALGDVPDDFEIELEAPDRPEHGDLATNTALRLASVLGDNPRSIAETLAERLRERVDPARIKSVEVAGPGFVNFRFAQDYLFDGLADLLAQGDTFGQTDAGAGERALVEYVSANPTGPLNVGHGRNAVLGDTIANLLAWTGYDVTREYYYNDAGRQMRVLAQSVRARYEALAGNVPTTTLTLDDDTTVEVPETFPEDGYLGQYIVEIAQALYDEHGDALCATDDLAPFRAAAETAIFGDIEATLRALNIDMDGYANEQALHDEGRVDAVLDGLADAGYTYEEDGALWFKTTEFGTEDDTVLVKQTGEPTYRTPDIAYHTAKFERGFDLMVDVFGADHHAAYPDVLSALDVLGYDTDRVDVILYQFVTLVRGDEPVKMSTRRANYVTLDDLIEQVGADVTRFFFLMRSPDTHLNFDLELAEEESEKNPVFYLQYAHARICSVLDKAEEVGFSHDEDADLALLTHEDEIALIKELLRFPRELQNAADARAPHFVPNYLRDVATAFSQFYDNCRIIGEEQELASARMRLALAAKTVLKNGLTVLGISAPRQM.

The short motif at A126–H136 is the 'HIGH' region element.

Belongs to the class-I aminoacyl-tRNA synthetase family. As to quaternary structure, monomer.

It is found in the cytoplasm. The catalysed reaction is tRNA(Arg) + L-arginine + ATP = L-arginyl-tRNA(Arg) + AMP + diphosphate. This is Arginine--tRNA ligase from Salinibacter ruber (strain DSM 13855 / M31).